Here is a 689-residue protein sequence, read N- to C-terminus: Glycine--tRNA ligase beta subunit (689 aa).

It belongs to the class-II aminoacyl-tRNA synthetase family. As to quaternary structure, tetramer of two alpha and two beta subunits.

The protein localises to the cytoplasm. The catalysed reaction is tRNA(Gly) + glycine + ATP = glycyl-tRNA(Gly) + AMP + diphosphate. In Shewanella sp. (strain W3-18-1), this protein is Glycine--tRNA ligase beta subunit.